The following is a 248-amino-acid chain: 14-3-3 protein zeta (248 aa).

The protein belongs to the 14-3-3 family. Homodimer; homodimerization is not essential for modulating the activity of Slo. Interacts with phosphorylated Slob; the interaction with Slob mediates an indirect interaction with Slo. Interacts with phosphorylated yki. Interacts with hemo; this represses 14-3-3zeta activity which prevents the 14-3-3zeta-mediated activation of phosphoinositide 3-kinase Pi3K68D. This, in turn, inhibits the Pi3K68D-mediated conversion of phosphatidylinositol to phosphatidylinositol-3-phosphate and prevents progression of early endosomes through the maturation process which regulates subsequent steps of phagocytic processing. Interacts with REPTOR (when phosphorylated), this interaction may assist the cytoplasmic retention of REPTOR. In terms of tissue distribution, predominantly expressed in the ventral nerve cord of the embryo, and in the neural tissues of the head. Also found in the region posterior to the morphogenetic furrow of the eye imaginal disk where cells differentiate as photoreceptors.

It localises to the cytoplasm. The protein resides in the early endosome. In terms of biological role, required in Raf-dependent cell proliferation and photoreceptor differentiation during eye development. Acts upstream of Raf and downstream of Ras, and is essential for viability. Acts as a negative regulator of the slo calcium channel via its interaction with slo-binding protein slob. Inhibits yki activity by restricting its nuclear localization. Binds to and promotes the activity of phosphoinositide 3-kinase Pi3K68D which converts phosphatidylinositol to phosphatidylinositol-3-phosphate and promotes maturation of early endosomes. The polypeptide is 14-3-3 protein zeta (14-3-3zeta) (Drosophila melanogaster (Fruit fly)).